Reading from the N-terminus, the 221-residue chain is Chalcone--flavanone isomerase (221 aa).

Thr52, Asn117, and Ser193 together coordinate substrate.

The protein belongs to the chalcone isomerase family. Flowers.

It carries out the reaction a chalcone = a flavanone.. It participates in secondary metabolite biosynthesis; flavonoid biosynthesis. Its function is as follows. Catalyzes the intramolecular cyclization of bicyclic chalcones into tricyclic (S)-flavanones. Responsible for the isomerization of 4,2',4',6'-tetrahydroxychalcone (also termed chalcone) into naringenin. The sequence is that of Chalcone--flavanone isomerase (CHI) from Gentiana triflora (Clustered gentian).